Reading from the N-terminus, the 908-residue chain is Metabotropic glutamate receptor 8 (908 aa).

Residues 1–33 (MVCEGKRLASCPCFFLLTAKFYWILTMMQRTHS) form the signal peptide. Topologically, residues 34-583 (QEYAHSIRVD…IIKLEWHSPW (550 aa)) are extracellular. Cysteine 64 and cysteine 106 are oxidised to a cystine. Asparagine 95 carries N-linked (GlcNAc...) asparagine glycosylation. L-glutamate-binding positions include serine 156, 177 to 179 (AST), and tyrosine 227. 7 disulfides stabilise this stretch: cysteine 246-cysteine 534, cysteine 369-cysteine 384, cysteine 424-cysteine 431, cysteine 516-cysteine 535, cysteine 520-cysteine 538, cysteine 541-cysteine 553, and cysteine 556-cysteine 569. A glycan (N-linked (GlcNAc...) asparagine) is linked at asparagine 298. Residue aspartate 309 participates in L-glutamate binding. An L-glutamate-binding site is contributed by lysine 401. N-linked (GlcNAc...) asparagine glycosylation is found at asparagine 452 and asparagine 480. Asparagine 565 carries an N-linked (GlcNAc...) asparagine glycan. A helical membrane pass occupies residues 584 to 608 (AVVPVFIAILGIIATTFVIVTFVRY). Residues 609–620 (NDTPIVRASGRE) lie on the Cytoplasmic side of the membrane. The chain crosses the membrane as a helical span at residues 621–641 (LSYVLLTGIFLCYSITFLMIA). Over 642–647 (APDTII) the chain is Extracellular. Residues 648-668 (CSFRRIFLGLGMCFSYAALLT) form a helical membrane-spanning segment. The Cytoplasmic portion of the chain corresponds to 669-695 (KTNRIHRIFEQGKKSVTAPKFISPASQ). The helical transmembrane segment at 696-716 (LVITFSLISVQLLGVFVWFVV) threads the bilayer. At 717-746 (DPPHTIIDYGEQRTLDPENARGVLKCDISD) the chain is on the extracellular side. Residues 747 to 768 (LSLICSLGYSILLMVTCTVYAI) traverse the membrane as a helical segment. Over 769-781 (KTRGVPETFNEAK) the chain is Cytoplasmic. Residues 782–803 (PIGFTMYTTCIIWLAFIPIFFG) traverse the membrane as a helical segment. At 804–818 (TAQSAEKMYIQTTTL) the chain is on the extracellular side. Residues 819–843 (TVSMSLSASVSLGMLYMPKVYIIIF) form a helical membrane-spanning segment. Topologically, residues 844–908 (HPEQNVQKRK…TYISYSNHSI (65 aa)) are cytoplasmic. Lysine 882 participates in a covalent cross-link: Glycyl lysine isopeptide (Lys-Gly) (interchain with G-Cter in SUMO1).

This sequence belongs to the G-protein coupled receptor 3 family. Interacts with PICK1. As to expression, prominent expression in olfactory bulb, pontine gray, lateral reticular nucleus of the thalamus, and piriform cortex. Less abundant expression incerebral cortex, hippocampus, cerebellum, and mammillary body.

The protein localises to the cell membrane. Functionally, G-protein coupled receptor for glutamate. Ligand binding causes a conformation change that triggers signaling via guanine nucleotide-binding proteins (G proteins) and modulates the activity of down-stream effectors. Signaling inhibits adenylate cyclase activity. The chain is Metabotropic glutamate receptor 8 (Grm8) from Rattus norvegicus (Rat).